A 99-amino-acid chain; its full sequence is MLADKVKLSAKDILEKEFKTGVRGYRQEDVDKFLDMIIKDYETFHQEIEELQQENLQLKKQLEEASKKQPVQSNTTNFDILKRLSNLEKHVFGSKLYDE.

A coiled-coil region spans residues leucine 34–valine 71.

The protein belongs to the GpsB family. Forms polymers through the coiled coil domains. Interacts with PBP1, MreC and EzrA.

It localises to the cytoplasm. In terms of biological role, divisome component that associates with the complex late in its assembly, after the Z-ring is formed, and is dependent on DivIC and PBP2B for its recruitment to the divisome. Together with EzrA, is a key component of the system that regulates PBP1 localization during cell cycle progression. Its main role could be the removal of PBP1 from the cell pole after pole maturation is completed. Also contributes to the recruitment of PBP1 to the division complex. Not essential for septum formation. This chain is Cell cycle protein GpsB, found in Bacillus velezensis (strain DSM 23117 / BGSC 10A6 / LMG 26770 / FZB42) (Bacillus amyloliquefaciens subsp. plantarum).